Reading from the N-terminus, the 799-residue chain is Ribosome-releasing factor 2, mitochondrial (799 aa).

One can recognise a tr-type G domain in the interval 19–306; sequence SKIRNIGIIA…AVVNYLPSPL (288 aa). GTP contacts are provided by residues 28–35, 93–97, and 145–148; these read AHIDAGKT, DTPGH, and NKMD.

Belongs to the TRAFAC class translation factor GTPase superfamily. Classic translation factor GTPase family. EF-G/EF-2 subfamily.

Its subcellular location is the mitochondrion. Its function is as follows. Mitochondrial GTPase that mediates the disassembly of ribosomes from messenger RNA at the termination of mitochondrial protein biosynthesis. Not involved in the GTP-dependent ribosomal translocation step during translation elongation. The polypeptide is Ribosome-releasing factor 2, mitochondrial (Vanderwaltozyma polyspora (strain ATCC 22028 / DSM 70294 / BCRC 21397 / CBS 2163 / NBRC 10782 / NRRL Y-8283 / UCD 57-17) (Kluyveromyces polysporus)).